Reading from the N-terminus, the 450-residue chain is MKVIDQFKNKKVLVLGLAKSGESAARLLDKLGAIVTVNDGKPFEDNPAAQCLLEEGIKVITGGHPLELLDEEFALMVKNPGIPYSNPMIEKALAKGIPVLTEVELAYLISEAPIIGITGSNGKTTTTTMIGEVLTAAGQHGLLSGNIGYPASQVAQIASDKDTLVMELSSFQLMGVQEFHPEIAVITNLMPTHIDYHGSFSEYVAAKWNIQNKMTAADFLVLNFNQDLAKDLTSKTEATVVPFSTLEKVDGAYLEDGQLYFRGEVVMAANEIGVPGSHNVENALATIAVAKLRDVDNQTIKETLSAFGGVKHRLQFVDDIKGVKFYNDSKSTNILATQKALSGFDNSKVVLIAGGLDRGNEFDELVPDITGLKKMVILGQSAERVKRAADKAGVAYVEATDIADATRKAYELATQGDVVLLSPANASWDMYANFEVRGDLFIDTVAELKE.

Residue 119 to 125 (GSNGKTT) coordinates ATP.

Belongs to the MurCDEF family.

The protein resides in the cytoplasm. The enzyme catalyses UDP-N-acetyl-alpha-D-muramoyl-L-alanine + D-glutamate + ATP = UDP-N-acetyl-alpha-D-muramoyl-L-alanyl-D-glutamate + ADP + phosphate + H(+). The protein operates within cell wall biogenesis; peptidoglycan biosynthesis. Functionally, cell wall formation. Catalyzes the addition of glutamate to the nucleotide precursor UDP-N-acetylmuramoyl-L-alanine (UMA). The sequence is that of UDP-N-acetylmuramoylalanine--D-glutamate ligase from Streptococcus pneumoniae (strain ATCC 700669 / Spain 23F-1).